We begin with the raw amino-acid sequence, 297 residues long: uncharacterized protein (297 aa).

Residues 175 to 199 (VLPTNRNNPVRSNVDIKPVNPPSSK) form a disordered region. Residues 176-185 (LPTNRNNPVR) are compositionally biased toward polar residues. N-linked (GlcNAc...) asparagine; by host glycosylation is present at asparagine 269. The helical transmembrane segment at 277 to 297 (LFGSPVLLICVASLLLLIIIL) threads the bilayer.

This sequence belongs to the ascovirus HvAV ORF18 family.

It is found in the membrane. This is an uncharacterized protein from Noctuidae (owlet moths).